Reading from the N-terminus, the 206-residue chain is Protein-methionine-sulfoxide reductase heme-binding subunit MsrQ (206 aa).

Transmembrane regions (helical) follow at residues 13-33 (IAIWLAATLPLLWLVLSINLG), 79-99 (LLGLWCFAWGTLHLLSYSILE), 116-136 (PYLTLGIISWLVLLALALTST), 147-167 (WQKLHNWVYVVAILAPIHYLW), and 169-189 (VKTLSPWPIIYAVMAALLLLL).

Belongs to the MsrQ family. Heterodimer of a catalytic subunit (MsrP) and a heme-binding subunit (MsrQ). The cofactor is FMN. Heme b is required as a cofactor.

It localises to the cell inner membrane. In terms of biological role, part of the MsrPQ system that repairs oxidized periplasmic proteins containing methionine sulfoxide residues (Met-O), using respiratory chain electrons. Thus protects these proteins from oxidative-stress damage caused by reactive species of oxygen and chlorine generated by the host defense mechanisms. MsrPQ is essential for the maintenance of envelope integrity under bleach stress, rescuing a wide series of structurally unrelated periplasmic proteins from methionine oxidation. MsrQ provides electrons for reduction to the reductase catalytic subunit MsrP, using the quinone pool of the respiratory chain. The sequence is that of Protein-methionine-sulfoxide reductase heme-binding subunit MsrQ from Yersinia pestis bv. Antiqua (strain Antiqua).